A 626-amino-acid chain; its full sequence is Threonine--tRNA ligase (626 aa).

Positions 1–144 are editing domain; sequence MRMLLIHADY…LSRTIVPEEG (144 aa). The interval 207–506 is catalytic; sequence PHVRLMLEHE…QAQGKKPMFP (300 aa). Zn(2+) contacts are provided by cysteine 299, histidine 351, and histidine 475.

Belongs to the class-II aminoacyl-tRNA synthetase family. In terms of assembly, homodimer. Requires Zn(2+) as cofactor.

The protein resides in the cytoplasm. The enzyme catalyses tRNA(Thr) + L-threonine + ATP = L-threonyl-tRNA(Thr) + AMP + diphosphate + H(+). Catalyzes the attachment of threonine to tRNA(Thr) in a two-step reaction: L-threonine is first activated by ATP to form Thr-AMP and then transferred to the acceptor end of tRNA(Thr). Also edits incorrectly charged L-seryl-tRNA(Thr). This is Threonine--tRNA ligase from Thermococcus gammatolerans (strain DSM 15229 / JCM 11827 / EJ3).